The primary structure comprises 308 residues: Lysophosphatidic acid receptor 6 (308 aa).

Residues 1–16 (MVSSNCSTEDSFKYTL) are Extracellular-facing. N5 carries an N-linked (GlcNAc...) asparagine glycan. A helical membrane pass occupies residues 17–43 (YGCVFSMVFVLGLIANCVAIYIFTFTL). The Cytoplasmic portion of the chain corresponds to 44 to 52 (KVRNETTTY). The chain crosses the membrane as a helical span at residues 53-76 (MLNLAISDLLFVFTLPFRIYYFVV). At 77–89 (RNWPFGDVLCKIS) the chain is on the extracellular side. The cysteines at positions 86 and 165 are disulfide-linked. The helical transmembrane segment at 90–109 (VTLFYTNMYGSILFLTCISV) threads the bilayer. Residues 110 to 130 (DRFLAIVHPFRSKTLRTKRNA) are Cytoplasmic-facing. Residues 131–151 (RIVCVAVWITVLAGSTPASFF) traverse the membrane as a helical segment. Topologically, residues 152–178 (QSTNRQNNTEQRTCFENFPESTWKTYL) are extracellular. Residues 179 to 206 (SRIVIFIEIVGFFIPLILNVTCSTMVLR) form a helical membrane-spanning segment. At 207–224 (TLNKPLTLSRNKLSKKKV) the chain is on the cytoplasmic side. The helical transmembrane segment at 225–250 (LKMIFVHLVIFCFCFVPYNITLILYS) threads the bilayer. The Extracellular portion of the chain corresponds to 251 to 269 (LMRTQTWINCSVVTAVRTM). A helical transmembrane segment spans residues 270-289 (YPVTLCIAVSNCCFDPIVYY). C281 carries S-palmitoyl cysteine lipidation. Residues 290–308 (FTSDTNSELDKKQQVHQNT) lie on the Cytoplasmic side of the membrane.

The protein belongs to the G-protein coupled receptor 1 family. In terms of tissue distribution, induced in activated T-cells.

It localises to the cell membrane. Binds to oleoyl-L-alpha-lysophosphatidic acid (LPA). Intracellular cAMP is involved in the receptor activation. The chain is Lysophosphatidic acid receptor 6 (LPAR6) from Gallus gallus (Chicken).